The following is a 431-amino-acid chain: Serine hydroxymethyltransferase (431 aa).

Residues leucine 128 and 132–134 contribute to the (6S)-5,6,7,8-tetrahydrofolate site; that span reads GHL. Lysine 237 bears the N6-(pyridoxal phosphate)lysine mark. Glutamate 253 contacts (6S)-5,6,7,8-tetrahydrofolate.

This sequence belongs to the SHMT family. Homodimer. The cofactor is pyridoxal 5'-phosphate.

Its subcellular location is the cytoplasm. The enzyme catalyses (6R)-5,10-methylene-5,6,7,8-tetrahydrofolate + glycine + H2O = (6S)-5,6,7,8-tetrahydrofolate + L-serine. The protein operates within one-carbon metabolism; tetrahydrofolate interconversion. It participates in amino-acid biosynthesis; glycine biosynthesis; glycine from L-serine: step 1/1. In terms of biological role, catalyzes the reversible interconversion of serine and glycine with tetrahydrofolate (THF) serving as the one-carbon carrier. This reaction serves as the major source of one-carbon groups required for the biosynthesis of purines, thymidylate, methionine, and other important biomolecules. Also exhibits THF-independent aldolase activity toward beta-hydroxyamino acids, producing glycine and aldehydes, via a retro-aldol mechanism. The protein is Serine hydroxymethyltransferase of Cereibacter sphaeroides (strain ATCC 17023 / DSM 158 / JCM 6121 / CCUG 31486 / LMG 2827 / NBRC 12203 / NCIMB 8253 / ATH 2.4.1.) (Rhodobacter sphaeroides).